Here is a 309-residue protein sequence, read N- to C-terminus: Anamorsin (309 aa).

The N-terminal SAM-like domain stretch occupies residues 6-172 (ISPGQLVAVF…KPNFEVGSSS (167 aa)). The interval 173 to 222 (QLKLLHKKSSSVKPVVDPATAKLWTLSANDMEDDSMDLIDSDELLDPEDL) is linker. Phosphoserine is present on residues serine 182, serine 183, and serine 213. [2Fe-2S] cluster-binding residues include cysteine 235, cysteine 244, cysteine 247, and cysteine 249. The tract at residues 235-249 (CGEGKKRKACKNCTC) is fe-S binding site A. Serine 269 carries the post-translational modification Phosphoserine. Residues cysteine 271, cysteine 274, cysteine 282, and cysteine 285 each coordinate [4Fe-4S] cluster. Short sequence motifs (cx2C motif) lie at residues 271–274 (CGNC) and 282–285 (CANC). The interval 271 to 285 (CGNCYLGDAFRCANC) is fe-S binding site B. Phosphoserine occurs at positions 302 and 304.

Belongs to the anamorsin family. As to quaternary structure, monomer. Interacts with NDOR1. Interacts with CHCHD4. [2Fe-2S] cluster is required as a cofactor. The cofactor is [4Fe-4S] cluster.

The protein resides in the cytoplasm. It is found in the nucleus. Its subcellular location is the mitochondrion intermembrane space. Functionally, component of the cytosolic iron-sulfur (Fe-S) protein assembly (CIA) machinery required for the maturation of extramitochondrial Fe-S proteins. Part of an electron transfer chain functioning in an early step of cytosolic Fe-S biogenesis, facilitating the de novo assembly of a [4Fe-4S] cluster on the scaffold complex NUBP1-NUBP2. Electrons are transferred to CIAPIN1 from NADPH via the FAD- and FMN-containing protein NDOR1. NDOR1-CIAPIN1 are also required for the assembly of the diferric tyrosyl radical cofactor of ribonucleotide reductase (RNR), probably by providing electrons for reduction during radical cofactor maturation in the catalytic small subunit. Has anti-apoptotic effects in the cell. Involved in negative control of cell death upon cytokine withdrawal. Promotes development of hematopoietic cells. The polypeptide is Anamorsin (Rattus norvegicus (Rat)).